The following is a 145-amino-acid chain: Large ribosomal subunit protein uL13 (145 aa).

Belongs to the universal ribosomal protein uL13 family. As to quaternary structure, part of the 50S ribosomal subunit. Interacts weakly with proteins L3 and L6.

Its function is as follows. This protein is one of the early assembly proteins of the 50S ribosomal subunit. Binds to 23S rRNA. The protein is Large ribosomal subunit protein uL13 of Haloarcula marismortui (strain ATCC 43049 / DSM 3752 / JCM 8966 / VKM B-1809) (Halobacterium marismortui).